The following is a 354-amino-acid chain: Putrescine/cadaverine-binding protein (354 aa).

The first 20 residues, 1-20 (MMKKLLLVATLMAGAAQATA), serve as a signal peptide directing secretion.

Belongs to the bacterial solute-binding protein 1 family.

The protein localises to the periplasm. Binds putrescine and cadaverine. The protein is Putrescine/cadaverine-binding protein of Pseudomonas aeruginosa (strain ATCC 15692 / DSM 22644 / CIP 104116 / JCM 14847 / LMG 12228 / 1C / PRS 101 / PAO1).